A 321-amino-acid polypeptide reads, in one-letter code: Tetraketide alpha-pyrone reductase 2 (321 aa).

Ser2 is modified (N-acetylserine). Residues 4–28, Lys40, and Tyr160 contribute to the NADP(+) site; that span reads YLVT…GHTV.

Belongs to the NAD(P)-dependent epimerase/dehydratase family. Dihydroflavonol-4-reductase subfamily.

It localises to the cytoplasm. May be involved in the biosynthesis of hydroxylated tetraketide compounds that serve as sporopollenin precursors (the main constituents of exine). Acts on tetraketide alpha-pyrones and reduces the carbonyl function on the tetraketide alkyl chain to a secondary alcohol function. This Arabidopsis thaliana (Mouse-ear cress) protein is Tetraketide alpha-pyrone reductase 2 (TKPR2).